The sequence spans 131 residues: Large ribosomal subunit protein bL19 (131 aa).

It belongs to the bacterial ribosomal protein bL19 family.

In terms of biological role, this protein is located at the 30S-50S ribosomal subunit interface and may play a role in the structure and function of the aminoacyl-tRNA binding site. The chain is Large ribosomal subunit protein bL19 from Anaeromyxobacter sp. (strain K).